A 520-amino-acid chain; its full sequence is Pantetheine hydrolase VNN2 (520 aa).

An N-terminal signal peptide occupies residues 1 to 22; the sequence is MVTSSFPISVAVFALITLQVGT. Residues 31–306 enclose the CN hydrolase domain; the sequence is YEHAVILPNK…GKLLLSEVDS (276 aa). The N-linked (GlcNAc...) asparagine glycan is linked to asparagine 39. Residue glutamate 80 is the Proton acceptor of the active site. Lysine 179 (proton donor) is an active-site residue. Cysteine 211 functions as the Nucleophile in the catalytic mechanism. Residues asparagine 273, asparagine 347, asparagine 357, asparagine 411, and asparagine 468 are each glycosylated (N-linked (GlcNAc...) asparagine). Cysteine 493 carries GPI-anchor amidated cysteine lipidation. The propeptide at 494–520 is removed in mature form; sequence GTSNSAITYLLIFILLMIIALQNIVML.

It belongs to the carbon-nitrogen hydrolase superfamily. BTD/VNN family. Widely expressed with higher expression in spleen and blood.

The protein resides in the cell membrane. It catalyses the reaction (R)-pantetheine + H2O = cysteamine + (R)-pantothenate. In terms of biological role, amidohydrolase that hydrolyzes specifically one of the carboamide linkages in D-pantetheine thus recycling pantothenic acid (vitamin B5) and releasing cysteamine. Involved in the thymus homing of bone marrow cells. May regulate beta-2 integrin-mediated cell adhesion, migration and motility of neutrophil. This is Pantetheine hydrolase VNN2 from Homo sapiens (Human).